The sequence spans 511 residues: V-type proton ATPase subunit B, brain isoform (511 aa).

R400 contacts ATP.

Belongs to the ATPase alpha/beta chains family. V-ATPase is a heteromultimeric enzyme made up of two complexes: the ATP-hydrolytic V1 complex and the proton translocation V0 complex. The V1 complex consists of three catalytic AB heterodimers that form a heterohexamer, three peripheral stalks each consisting of EG heterodimers, one central rotor including subunits D and F, and the regulatory subunits C and H. The proton translocation complex V0 consists of the proton transport subunit a, a ring of proteolipid subunits c9c'', rotary subunit d, subunits e and f, and the accessory subunits ATP6AP1/Ac45 and ATP6AP2/PRR. As to expression, kidney; found in early distal nephron, encompassing thick ascending limbs and distal convoluted tubules and in the alpha-intercalated cells of the cortical collecting ducts (at protein level). Expressed in epididymal clear cells (at protein level). Mainly expressed in the organ of Corti and spiral ganglion neurons, in both the early postnatal cochlea (P2) and the adult cochlea (P30).

It localises to the apical cell membrane. The protein resides in the melanosome. It is found in the cytoplasm. The protein localises to the cytoplasmic vesicle. Its subcellular location is the secretory vesicle. It localises to the synaptic vesicle membrane. The protein resides in the clathrin-coated vesicle membrane. Non-catalytic subunit of the V1 complex of vacuolar(H+)-ATPase (V-ATPase), a multisubunit enzyme composed of a peripheral complex (V1) that hydrolyzes ATP and a membrane integral complex (V0) that translocates protons. V-ATPase is responsible for acidifying and maintaining the pH of intracellular compartments and in some cell types, is targeted to the plasma membrane, where it is responsible for acidifying the extracellular environment. In renal intercalated cells, can partially compensate the lack of ATP6V1B1 and mediate secretion of protons (H+) into the urine under base-line conditions but not in conditions of acid load. The chain is V-type proton ATPase subunit B, brain isoform (Atp6v1b2) from Mus musculus (Mouse).